Here is a 255-residue protein sequence, read N- to C-terminus: NADH dehydrogenase [ubiquinone] flavoprotein 2, mitochondrial (255 aa).

Residues 1 to 35 (MLARLAAKRLLEIRQVFRQPTSQVTRSLSTALNYH) constitute a mitochondrion transit peptide. [2Fe-2S] cluster contacts are provided by Cys130, Cys135, Cys171, and Cys175. The tract at residues 214 to 255 (RKGEKPPHGTQNPKRIKCGPEGGNKTLLGEPKPPQFRDLDAC) is disordered.

The protein belongs to the complex I 24 kDa subunit family. In terms of assembly, complex I is composed of at least 49 different subunits. This is a component of the flavoprotein-sulfur (FP) fragment of the enzyme. The cofactor is [2Fe-2S] cluster.

The protein resides in the mitochondrion inner membrane. It catalyses the reaction a ubiquinone + NADH + 5 H(+)(in) = a ubiquinol + NAD(+) + 4 H(+)(out). Its function is as follows. Core subunit of the mitochondrial membrane respiratory chain NADH dehydrogenase (Complex I) that is believed to belong to the minimal assembly required for catalysis. Complex I functions in the transfer of electrons from NADH to the respiratory chain. The immediate electron acceptor for the enzyme is believed to be ubiquinone. The protein is NADH dehydrogenase [ubiquinone] flavoprotein 2, mitochondrial of Arabidopsis thaliana (Mouse-ear cress).